Here is a 256-residue protein sequence, read N- to C-terminus: MRYALGVEYDGSDFRGWQNLGEGGPSVQASLEQALSSVADTPLQVVCAGRTDAGVHGQCQVVHFDTDVVRDPRAWMLGTTTRLPRSIAVRWCVPVADDFHARFSARARRYRYRLLNREVRPALERQTLSWERRALDETRMHIAGQALLGENDFNAFRSVQCQALHARRELQSLQVSRHGEVIEVSVQGNAFLHHMVRNIVGSLILVGSGEKPVEWIAELLAGRDRTVAGPTAPPQGLVFLGPLYPDNWHLPAEVTL.

Catalysis depends on aspartate 52, which acts as the Nucleophile. Residue tyrosine 110 coordinates substrate.

It belongs to the tRNA pseudouridine synthase TruA family. As to quaternary structure, homodimer.

The catalysed reaction is uridine(38/39/40) in tRNA = pseudouridine(38/39/40) in tRNA. In terms of biological role, formation of pseudouridine at positions 38, 39 and 40 in the anticodon stem and loop of transfer RNAs. The chain is tRNA pseudouridine synthase A from Stenotrophomonas maltophilia (strain R551-3).